The following is an 851-amino-acid chain: Transcriptional regulator RFX1 (851 aa).

Polar residues-rich tracts occupy residues 1-11 (MSSDQTPQNRN) and 20-34 (PRLQ…STGP). Disordered regions lie at residues 1–121 (MSSD…EPHP), 134–170 (QSQF…PQTY), and 195–230 (HEAS…TGEN). A compositionally biased stretch (basic and acidic residues) spans 38 to 53 (QQRERSQEQESDHEHQ). Positions 54–84 (QAQQHLHQFQQSNLTPSTTAFPSSTSIPTFS) are enriched in low complexity. The segment covering 85-114 (KQDQGYHNQFSSPQSSYRKIGNFAQSSNAP) has biased composition (polar residues). Over residues 141–170 (YSSPYIGQSQSQSQSQSQAQPQPHPQPQTY) the composition is skewed to low complexity. The segment covering 199-211 (SADNDSATNITTP) has biased composition (polar residues). Positions 282–357 (GMVWLLNSCD…YHYCGIKLTG (76 aa)) form a DNA-binding region, RFX-type winged-helix. 2 disordered regions span residues 368–411 (YQQK…SVSY) and 783–806 (PPSL…TGTQ). Polar residues predominate over residues 384 to 393 (AQVGSSTSSA). Low complexity predominate over residues 783–797 (PPSLSSLPQTQQQNP).

This sequence belongs to the RFX family.

The protein resides in the nucleus. Its function is as follows. Transcription factor involved in DNA damage responses, morphogenesis, and virulence. The protein is Transcriptional regulator RFX1 (RFX1) of Candida albicans (strain SC5314 / ATCC MYA-2876) (Yeast).